A 110-amino-acid chain; its full sequence is Pathogenesis-related protein (110 aa).

A signal peptide spans 1–19; sequence AFLLAATLTISSHMQEAGA.

The protein belongs to the thaumatin family.

The chain is Pathogenesis-related protein from Juniperus virginiana (Eastern redcedar).